The following is a 204-amino-acid chain: Guanylate kinase (204 aa).

The region spanning 5 to 184 (GLLLVLSGPS…AVDHIKSIVE (180 aa)) is the Guanylate kinase-like domain. An ATP-binding site is contributed by 12 to 19 (GPSGVGKG).

Belongs to the guanylate kinase family.

It is found in the cytoplasm. It carries out the reaction GMP + ATP = GDP + ADP. Its function is as follows. Essential for recycling GMP and indirectly, cGMP. This chain is Guanylate kinase, found in Lactobacillus johnsonii (strain CNCM I-12250 / La1 / NCC 533).